The primary structure comprises 156 residues: Ribosomal RNA large subunit methyltransferase H (156 aa).

S-adenosyl-L-methionine-binding positions include Leu73, Gly104, and 123–128 (LSSLTL).

Belongs to the RNA methyltransferase RlmH family. As to quaternary structure, homodimer.

Its subcellular location is the cytoplasm. It carries out the reaction pseudouridine(1915) in 23S rRNA + S-adenosyl-L-methionine = N(3)-methylpseudouridine(1915) in 23S rRNA + S-adenosyl-L-homocysteine + H(+). Its function is as follows. Specifically methylates the pseudouridine at position 1915 (m3Psi1915) in 23S rRNA. The protein is Ribosomal RNA large subunit methyltransferase H of Neisseria gonorrhoeae (strain ATCC 700825 / FA 1090).